The primary structure comprises 156 residues: 6,7-dimethyl-8-ribityllumazine synthase (156 aa).

5-amino-6-(D-ribitylamino)uracil-binding positions include F23, 57–59 (AYE), and 81–83 (AII). A (2S)-2-hydroxy-3-oxobutyl phosphate-binding site is contributed by 86-87 (GT). Catalysis depends on H89, which acts as the Proton donor. F114 is a 5-amino-6-(D-ribitylamino)uracil binding site. R128 contacts (2S)-2-hydroxy-3-oxobutyl phosphate.

Belongs to the DMRL synthase family.

The catalysed reaction is (2S)-2-hydroxy-3-oxobutyl phosphate + 5-amino-6-(D-ribitylamino)uracil = 6,7-dimethyl-8-(1-D-ribityl)lumazine + phosphate + 2 H2O + H(+). It participates in cofactor biosynthesis; riboflavin biosynthesis; riboflavin from 2-hydroxy-3-oxobutyl phosphate and 5-amino-6-(D-ribitylamino)uracil: step 1/2. Functionally, catalyzes the formation of 6,7-dimethyl-8-ribityllumazine by condensation of 5-amino-6-(D-ribitylamino)uracil with 3,4-dihydroxy-2-butanone 4-phosphate. This is the penultimate step in the biosynthesis of riboflavin. This chain is 6,7-dimethyl-8-ribityllumazine synthase, found in Helicobacter pylori (strain G27).